The sequence spans 349 residues: Protein POOR HOMOLOGOUS SYNAPSIS 1 (349 aa).

The protein localises to the cytoplasm. Functionally, required for accurate chromosome segregation in meiosis. Required for pairing to occur between homologous chromosomes. Acts in early recombination steps and ensures pairing fidelity and proper repair of meiotic DNA double-strand-breaks. Regulates recombination and pairing of homologous chromosomes during meiotic prophase by controlling transport of RAD50 from cytoplasm to the nucleus. May affect pairing of the gene-rich fraction of the genome rather than preventing pairing between repetitive DNA elements. The polypeptide is Protein POOR HOMOLOGOUS SYNAPSIS 1 (Arabidopsis thaliana (Mouse-ear cress)).